A 195-amino-acid chain; its full sequence is Imidazoleglycerol-phosphate dehydratase (195 aa).

This sequence belongs to the imidazoleglycerol-phosphate dehydratase family.

The protein localises to the cytoplasm. It catalyses the reaction D-erythro-1-(imidazol-4-yl)glycerol 3-phosphate = 3-(imidazol-4-yl)-2-oxopropyl phosphate + H2O. The protein operates within amino-acid biosynthesis; L-histidine biosynthesis; L-histidine from 5-phospho-alpha-D-ribose 1-diphosphate: step 6/9. This chain is Imidazoleglycerol-phosphate dehydratase, found in Methanosphaerula palustris (strain ATCC BAA-1556 / DSM 19958 / E1-9c).